A 146-amino-acid polypeptide reads, in one-letter code: UPF0260 protein VP2169 (146 aa).

This sequence belongs to the UPF0260 family.

This is UPF0260 protein VP2169 from Vibrio parahaemolyticus serotype O3:K6 (strain RIMD 2210633).